Here is a 386-residue protein sequence, read N- to C-terminus: Putative 8-amino-7-oxononanoate synthase (386 aa).

A substrate-binding site is contributed by Arg22. Residue 109-110 coordinates pyridoxal 5'-phosphate; the sequence is GY. Residue His134 participates in substrate binding. Residues Ser182, 207–210, and 238–241 each bind pyridoxal 5'-phosphate; these read DEAH and TLSK. The residue at position 241 (Lys241) is an N6-(pyridoxal phosphate)lysine. Thr356 is a substrate binding site.

The protein belongs to the class-II pyridoxal-phosphate-dependent aminotransferase family. BioF subfamily. Homodimer. It depends on pyridoxal 5'-phosphate as a cofactor.

It carries out the reaction 6-carboxyhexanoyl-[ACP] + L-alanine + H(+) = (8S)-8-amino-7-oxononanoate + holo-[ACP] + CO2. It participates in cofactor biosynthesis; biotin biosynthesis. In terms of biological role, catalyzes the decarboxylative condensation of pimeloyl-[acyl-carrier protein] and L-alanine to produce 8-amino-7-oxononanoate (AON), [acyl-carrier protein], and carbon dioxide. This Nostoc sp. (strain PCC 7120 / SAG 25.82 / UTEX 2576) protein is Putative 8-amino-7-oxononanoate synthase (bioF).